The chain runs to 77 residues: DNA-directed RNA polymerase subunit omega (77 aa).

Belongs to the RNA polymerase subunit omega family. In terms of assembly, in cyanobacteria the RNAP catalytic core is composed of 2 alpha, 1 beta, 1 beta', 1 gamma and 1 omega subunit. When a sigma factor is associated with the core the holoenzyme is formed, which can initiate transcription.

The catalysed reaction is RNA(n) + a ribonucleoside 5'-triphosphate = RNA(n+1) + diphosphate. Its function is as follows. Promotes RNA polymerase assembly. Latches the N- and C-terminal regions of the beta' subunit thereby facilitating its interaction with the beta and alpha subunits. The sequence is that of DNA-directed RNA polymerase subunit omega from Thermosynechococcus vestitus (strain NIES-2133 / IAM M-273 / BP-1).